The following is a 712-amino-acid chain: Integrator complex subunit 9 homolog (712 aa).

Residues 47 to 70 (NNNNNNNNNNNNNNNNNNNNNNNN) are compositionally biased toward low complexity. Residues 47 to 73 (NNNNNNNNNNNNNNNNNNNNNNNNSYS) are disordered.

Belongs to the metallo-beta-lactamase superfamily. RNA-metabolizing metallo-beta-lactamase-like family. INTS9 subfamily. Component of the Integrator complex. The core complex associates with protein phosphatase 2A subunits, to form the Integrator-PP2A (INTAC) complex.

It is found in the nucleus. Its subcellular location is the cytoplasm. Component of the integrator complex, a multiprotein complex that terminates RNA polymerase II (Pol II) transcription in the promoter-proximal region of genes. The integrator complex provides a quality checkpoint during transcription elongation by driving premature transcription termination of transcripts that are unfavorably configured for transcriptional elongation: the complex terminates transcription by (1) catalyzing dephosphorylation of the C-terminal domain (CTD) of Pol II subunit polr2a, (2) degrading the exiting nascent RNA transcript via endonuclease activity and (3) promoting the release of Pol II from bound DNA. The integrator complex is also involved in terminating the synthesis of non-coding Pol II transcripts, such as enhancer RNAs (eRNAs), small nuclear RNAs (snRNAs), telomerase RNAs and long non-coding RNAs (lncRNAs). The polypeptide is Integrator complex subunit 9 homolog (ints9) (Dictyostelium discoideum (Social amoeba)).